The primary structure comprises 537 residues: Phosphoenolpyruvate carboxykinase (ATP) (537 aa).

Residues R61, Y195, and K201 each coordinate substrate. Residues K201, H220, and 236–244 contribute to the ATP site; that span reads GLSGTGKTT. 2 residues coordinate Mn(2+): K201 and H220. D257 is a Mn(2+) binding site. E285, R323, and T448 together coordinate ATP. R323 is a binding site for substrate.

Belongs to the phosphoenolpyruvate carboxykinase (ATP) family. Mn(2+) serves as cofactor.

The protein localises to the cytoplasm. It carries out the reaction oxaloacetate + ATP = phosphoenolpyruvate + ADP + CO2. It participates in carbohydrate biosynthesis; gluconeogenesis. Its function is as follows. Involved in the gluconeogenesis. Catalyzes the conversion of oxaloacetate (OAA) to phosphoenolpyruvate (PEP) through direct phosphoryl transfer between the nucleoside triphosphate and OAA. This Rhodopseudomonas palustris (strain BisA53) protein is Phosphoenolpyruvate carboxykinase (ATP).